Consider the following 93-residue polypeptide: Small ribosomal subunit protein uS19 (93 aa).

This sequence belongs to the universal ribosomal protein uS19 family.

In terms of biological role, protein S19 forms a complex with S13 that binds strongly to the 16S ribosomal RNA. This chain is Small ribosomal subunit protein uS19, found in Ruminiclostridium cellulolyticum (strain ATCC 35319 / DSM 5812 / JCM 6584 / H10) (Clostridium cellulolyticum).